The following is a 215-amino-acid chain: Eukaryotic translation initiation factor 4E-1 (215 aa).

Positions 1–32 (MAEDTETRPASAGAEEREEGEIADDGDGSSAA) are disordered. The span at 16-27 (EREEGEIADDGD) shows a compositional bias: acidic residues. EIF4G-binding regions lie at residues 40 to 43 (HPLE) and 50 to 86 (FDNP…NNIH). Residues 58 to 63 (RQVAWG), Lys-90, and 108 to 109 (WE) contribute to the mRNA site. A disulfide bridge links Cys-113 with Cys-151. The interval 134 to 143 (HTLLAMIGEQ) is EIF4G-binding. MRNA is bound by residues 158-163 (RQKQER) and 203-207 (KRSDK).

This sequence belongs to the eukaryotic initiation factor 4E family. EIF4F is a multi-subunit complex, the composition of which varies with external and internal environmental conditions. It is composed of at least EIF4A, EIF4E and EIF4G. EIF4E is also known to interact with other partners. In higher plants two isoforms of EIF4F have been identified, named isoform EIF4F and isoform EIF(iso)4F. Isoform EIF4F has subunits p220 and p26, whereas isoform EIF(iso)4F has subunits p82 and p28. Post-translationally, according to the redox status, the Cys-113-Cys-151 disulfide bridge may have a role in regulating protein function by affecting its ability to bind capped mRNA.

Its subcellular location is the nucleus. The protein localises to the cytoplasm. In terms of biological role, component of the protein complex eIF4F, which is involved in the recognition of the mRNA cap, ATP-dependent unwinding of 5'-terminal secondary structure and recruitment of mRNA to the ribosome. Recognizes and binds the 7-methylguanosine-containing mRNA cap during an early step in the initiation of protein synthesis and facilitates ribosome binding by inducing the unwinding of the mRNAs secondary structures. The polypeptide is Eukaryotic translation initiation factor 4E-1 (Triticum aestivum (Wheat)).